Consider the following 625-residue polypeptide: Isocitrate dehydrogenase kinase/phosphatase (625 aa).

ATP is bound by residues 325–331 (APGIKGM) and Lys346. The active site involves Asp381. Positions 596 to 625 (RRHSPGRNDHELLTHLPPEPMLTGLSGMTP) are disordered.

The protein belongs to the AceK family.

The protein resides in the cytoplasm. It carries out the reaction L-seryl-[isocitrate dehydrogenase] + ATP = O-phospho-L-seryl-[isocitrate dehydrogenase] + ADP + H(+). Functionally, bifunctional enzyme which can phosphorylate or dephosphorylate isocitrate dehydrogenase (IDH) on a specific serine residue. This is a regulatory mechanism which enables bacteria to bypass the Krebs cycle via the glyoxylate shunt in response to the source of carbon. When bacteria are grown on glucose, IDH is fully active and unphosphorylated, but when grown on acetate or ethanol, the activity of IDH declines drastically concomitant with its phosphorylation. This chain is Isocitrate dehydrogenase kinase/phosphatase, found in Polaromonas sp. (strain JS666 / ATCC BAA-500).